A 174-amino-acid chain; its full sequence is NADH-ubiquinone oxidoreductase chain 6 (174 aa).

Transmembrane regions (helical) follow at residues 1 to 21, 24 to 44, 47 to 67, 86 to 106, 111 to 131, and 151 to 171; these read MTYA…GFSS, SPIY…AVIL, GGGY…MVVF, AEVL…VLWV, GVVV…EGEG, and WLVV…IEIA.

It belongs to the complex I subunit 6 family. Core subunit of respiratory chain NADH dehydrogenase (Complex I) which is composed of 45 different subunits.

It localises to the mitochondrion inner membrane. It catalyses the reaction a ubiquinone + NADH + 5 H(+)(in) = a ubiquinol + NAD(+) + 4 H(+)(out). Functionally, core subunit of the mitochondrial membrane respiratory chain NADH dehydrogenase (Complex I) which catalyzes electron transfer from NADH through the respiratory chain, using ubiquinone as an electron acceptor. Essential for the catalytic activity and assembly of complex I. The chain is NADH-ubiquinone oxidoreductase chain 6 (MT-ND6) from Pongo pygmaeus (Bornean orangutan).